The chain runs to 341 residues: Glyceraldehyde-3-phosphate dehydrogenase 4 (341 aa).

Residues 13 to 14 (RI), D35, and K85 each bind NAD(+). D-glyceraldehyde 3-phosphate contacts are provided by residues 157-159 (SCT), T188, 217-218 (TG), and R240. C158 acts as the Nucleophile in catalysis. N322 serves as a coordination point for NAD(+).

This sequence belongs to the glyceraldehyde-3-phosphate dehydrogenase family. As to quaternary structure, homotetramer.

It is found in the cytoplasm. The catalysed reaction is D-glyceraldehyde 3-phosphate + phosphate + NAD(+) = (2R)-3-phospho-glyceroyl phosphate + NADH + H(+). The protein operates within carbohydrate degradation; glycolysis; pyruvate from D-glyceraldehyde 3-phosphate: step 1/5. The sequence is that of Glyceraldehyde-3-phosphate dehydrogenase 4 (gpd-4) from Caenorhabditis elegans.